We begin with the raw amino-acid sequence, 259 residues long: Deoxyribose-phosphate aldolase (259 aa).

Aspartate 102 functions as the Proton donor/acceptor in the catalytic mechanism. Lysine 167 acts as the Schiff-base intermediate with acetaldehyde in catalysis. Lysine 201 acts as the Proton donor/acceptor in catalysis.

This sequence belongs to the DeoC/FbaB aldolase family. DeoC type 2 subfamily.

It localises to the cytoplasm. It carries out the reaction 2-deoxy-D-ribose 5-phosphate = D-glyceraldehyde 3-phosphate + acetaldehyde. It functions in the pathway carbohydrate degradation; 2-deoxy-D-ribose 1-phosphate degradation; D-glyceraldehyde 3-phosphate and acetaldehyde from 2-deoxy-alpha-D-ribose 1-phosphate: step 2/2. Catalyzes a reversible aldol reaction between acetaldehyde and D-glyceraldehyde 3-phosphate to generate 2-deoxy-D-ribose 5-phosphate. This Edwardsiella ictaluri (strain 93-146) protein is Deoxyribose-phosphate aldolase.